Reading from the N-terminus, the 343-residue chain is MSASHADQPTQTVSYPQLIDLLRRIFVVHGTSPEVADVLAENCASAQRDGSHSHGIFRIPGYLSSLASGWVDGKAVPVVEDVGAAFVRVDACNGFAQPALAAARSLLIDKARSAGVAILAIRGSHHFAALWPDVEPFAEQGLVALSMVNSMTCVVPHGARQPLFGTNPIAFGAPRAGGEPIVFDLATSAIAHGDVQIAAREGRLLPAGMGVDRDGLPTQEPRAILDGGALLPFGGHKGSALSMMVELLAAGLTGGNFSFEFDWSKHPGAQTPWTGQLLIVIDPDKGAGQHFAQRSEELVRQLHGVGQERLPGDRRYLERARSMAHGIVIAQADLERLQELAGH.

The active-site Charge relay system is the S53. H54 (proton donor) is an active-site residue. R58 provides a ligand contact to substrate. 126-130 (HFAAL) contacts NADP(+). Residue T166 participates in substrate binding. 184-186 (DLA) is an NADP(+) binding site. A substrate-binding site is contributed by 192–193 (HG). The Charge relay system role is filled by D194. Residues 236 to 237 (HK) and 309 to 315 (RLPGDRR) each bind NADP(+).

It belongs to the LDH2/MDH2 oxidoreductase family. As to quaternary structure, homodimer.

It carries out the reaction L-pipecolate + NADP(+) = Delta(1)-piperideine-2-carboxylate + NADPH + H(+). The enzyme catalyses L-proline + NADP(+) = 1-pyrroline-2-carboxylate + NADPH + H(+). The catalysed reaction is N-methyl-L-alanine + NADP(+) + H2O = methylamine + pyruvate + NADPH + H(+). Is inhibited by the substrate analog pyrrole-2-carboxylate, and by 2-picolinate. Its function is as follows. Catalyzes the reduction of both Delta(1)-pyrroline-2-carboxylate (Pyr2C) and Delta(1)-piperideine-2-carboxylate (Pip2C) to L-proline and L-pipecolate, respectively, using NADPH as the electron donor. Can catalyze the reverse oxidation reactions, albeit at a much lower rate. Is also able to catalyze in vitro the NADPH-dependent formation of N-methylalanine from pyruvate and N-methylamine; can act on other alpha-keto acids and specifically uses methylamine and not ammonia for these reductive amination reactions. Can use NADH instead of NADPH, although with much less efficiency. In Pseudomonas syringae pv. tomato, this protein is Delta(1)-pyrroline-2-carboxylate/Delta(1)-piperideine-2-carboxylate reductase.